We begin with the raw amino-acid sequence, 267 residues long: GTP cyclohydrolase FolE2 2 (267 aa).

This sequence belongs to the GTP cyclohydrolase IV family.

It carries out the reaction GTP + H2O = 7,8-dihydroneopterin 3'-triphosphate + formate + H(+). It functions in the pathway cofactor biosynthesis; 7,8-dihydroneopterin triphosphate biosynthesis; 7,8-dihydroneopterin triphosphate from GTP: step 1/1. Converts GTP to 7,8-dihydroneopterin triphosphate. This is GTP cyclohydrolase FolE2 2 from Cupriavidus metallidurans (strain ATCC 43123 / DSM 2839 / NBRC 102507 / CH34) (Ralstonia metallidurans).